Consider the following 558-residue polypeptide: Potassium-transporting ATPase potassium-binding subunit 1 (558 aa).

The next 12 helical transmembrane spans lie at 1 to 21, 66 to 86, 127 to 147, 166 to 186, 245 to 265, 281 to 301, 327 to 347, 354 to 374, 377 to 397, 416 to 436, 482 to 502, and 531 to 551; these read MEII…SGYL, FNGF…WLFL, MIVM…VCIA, IVRF…ILLM, IWSN…MLFL, ALIL…LTMW, FGAG…TGSV, LTPI…VFGG, VGLM…SLMV, IVLV…LAFM, ISTG…QLMI, and IVFI…LGPI.

Belongs to the KdpA family. In terms of assembly, the system is composed of three essential subunits: KdpA, KdpB and KdpC.

The protein localises to the cell membrane. Its function is as follows. Part of the high-affinity ATP-driven potassium transport (or Kdp) system, which catalyzes the hydrolysis of ATP coupled with the electrogenic transport of potassium into the cytoplasm. This subunit binds the extracellular potassium ions and delivers the ions to the membrane domain of KdpB through an intramembrane tunnel. This is Potassium-transporting ATPase potassium-binding subunit 1 from Staphylococcus aureus (strain Mu50 / ATCC 700699).